The chain runs to 1807 residues: MPGPDDDVREPTAAARTNNSGYGLRAAPSSITSGLDSVVSVNSYRSSELNAEEVNVDDQECADSDILESPNDGMTIMNDDDADLSEEEEEVMENSIDFSVNRATVTKAGVIPCCVFVGRVRWGTTDWEIYFGQKQLLRLHFNLHLYSLFNRHKLLRGVHLPCTIWREKRAEKRVMDVYVVQDYIRQLLKDRDLRNSEPLLSFLEVSPSRAMLRLGPSLKEGYVHMRINGPFQLPLYTCFNRTIEALYRHLYRAWMRIAFVSAIVGFIFPICLVIVTSLPTFFSPQKELVNSDSGTKEVSTKLNTAGVFLGLAVLGGILFFAVFVYKFFQHRLGVIRRWVVLKPSCFAAYRNRNDREPSEVFLFDKNFTARKGSYRQGVSWMPSGLVVGSKAGDIEIDTGHYYTRLTAFVALMGVCYGIMRLSNSIYDFEYLSLDKSMGVPITNASGYENWTESRDAEYCGYYFIVPKGTTVYVESKDDSAVISQLQMPSSNSMTANLGFFWQSDSMGYSLNVITNAVGAGTMVSVVKPIDAKNDRFFESGTNYSMPTVGNLTLEGVKTDIDVQSFSNVESFCAITVRIAPLTWRSYVYYILFLFAGGIIAPVVGFLANYFVTYLGIWHPHVRRDHWFRCVRRLQKLKRQETSTRFNSFAPQHISTIDDDESATITAKAKAAKLAIGNTPTSNINQVVDSVVKQEAETASRMGTGNLAPASSRVDSSTQSEDSFEAPKPPPSSVSWHVDAEDTYAAMYKAISNAKYEILIAGWWVCPDLFLLRPGRKLPPREADEDPDGQQVNKTMLRQVLMKKAEAGVKIYVLIYREVKLALTLNSAYTKRSLMVHPNIRVLRDPIFQIQSLGFWSHHEKIVCIDQSLAFVGGLDLCFGRYDHHGHPISDPSDDPVWTGKDYSNPIIKDFVRVNKPFEDLIDRASQPRMPWHDVHCSISGPPVQDVAYHLIQRWNFVCSKNDYQLRTGWCICFRSRRFKFLPKCLVPMDFNGWTLQYPSSDPEPMRDGSTRTTIPLVREDSLSMVEPFQVVQSVNPMYPCTATGPQWPPTSSLHPINPMRPPLTSASTTTGPLDDGEVLRAQRGESILQVFHPSANICNIQVCRSVSMWSAGVPTEASIQAAYMDVIANSKHFLYIENQFFVSGMDGNGIVRNRILQALVDRIERAVQRDEKFRVYVVMPLLPAFEGNIRSHELTNLHAVMHWQFATICRGRYSLFEALKGVTNHPENYVAFFGLRKYGIMPNGCAATEQIYIHSKLMIADDRCAILGSANINDRSMNGDRDSEIALVIEDMQYEDGVMNEKPYRRGVAASKLRLQLFREHLGLADDDLSVADPTSDHTWQAIKSTASSNTKIFEAVFDCAPSNRMRAFVNFQSIEVTQIFENQRMNVLKVPGRSHVWDAQNLKDGDYAPWTDVNGVPIAADRVDLRDFEVDNYRDKKKKLFSMDHDGWCYARNFSIFQEVRTMKTDYKKREKLQHLVADRLMAQVRRRRWVKKGLLPPRDPRESSFSLASDDEEHGRFYSLWRRLQQGDFSRSNSVSTPTNFSQLDTDGGISGSVSVGGTNHGRRLYNSNSMPSNASILGDNPTTRPPVLGDAPSYPNSPSVASFQHTPQSPAIATGARSVRSARTSSLLCTGAGVRTRGNTRSARGSFYGMFSVTGNRNLDTDDESSDAGSEYGGGHGIRASLKRWYSTMDVLDFGRRSKFNAEYFDTDEDHLHSDDPLLEDGRGSYHAATREGLLTEEAVEGSDDEDAECQIGHVQTAATVRKEDETRARAQLSEIRGHLVEFPLDFLVEEILKPSVLPADIHI.

The segment at 1 to 28 (MPGPDDDVREPTAAARTNNSGYGLRAAP) is disordered. The next 3 membrane-spanning stretches (helical) occupy residues 257-277 (IAFV…IVTS), 305-325 (AGVF…VFVY), and 587-607 (VYYI…GFLA). Residues 697-734 (TASRMGTGNLAPASSRVDSSTQSEDSFEAPKPPPSSVS) are disordered. PLD phosphodiesterase domains follow at residues 853 to 880 (GFWS…CFGR) and 1249 to 1276 (EQIY…NDRS). Active-site residues include histidine 858, lysine 860, aspartate 865, histidine 1254, lysine 1256, and aspartate 1261. 3 stretches are compositionally biased toward polar residues: residues 1531–1547 (FSRS…SQLD), 1568–1578 (YNSNSMPSNAS), and 1597–1614 (YPNS…QSPA). The segment at 1531–1621 (FSRSNSVSTP…SPAIATGARS (91 aa)) is disordered.

The protein belongs to the phospholipase D family. TM-PLD subfamily.

Its subcellular location is the membrane. It carries out the reaction a 1,2-diacyl-sn-glycero-3-phosphocholine + H2O = a 1,2-diacyl-sn-glycero-3-phosphate + choline + H(+). Functionally, hydrolyzes glycerol-phospholipids at the terminal phosphodiesteric bond. The chain is Phospholipase D from Phytophthora infestans (Potato late blight agent).